Here is a 101-residue protein sequence, read N- to C-terminus: Signal recognition particle 19 kDa protein (101 aa).

The protein belongs to the SRP19 family. In terms of assembly, part of the signal recognition particle protein translocation system, which is composed of SRP and FtsY. Archaeal SRP consists of a 7S RNA molecule of 300 nucleotides and two protein subunits: SRP54 and SRP19.

It is found in the cytoplasm. Functionally, involved in targeting and insertion of nascent membrane proteins into the cytoplasmic membrane. Binds directly to 7S RNA and mediates binding of the 54 kDa subunit of the SRP. In Methanosarcina acetivorans (strain ATCC 35395 / DSM 2834 / JCM 12185 / C2A), this protein is Signal recognition particle 19 kDa protein.